We begin with the raw amino-acid sequence, 305 residues long: Coenzyme PQQ synthesis protein B (305 aa).

The protein belongs to the PqqB family.

Its pathway is cofactor biosynthesis; pyrroloquinoline quinone biosynthesis. In terms of biological role, may be involved in the transport of PQQ or its precursor to the periplasm. The polypeptide is Coenzyme PQQ synthesis protein B (Cupriavidus taiwanensis (strain DSM 17343 / BCRC 17206 / CCUG 44338 / CIP 107171 / LMG 19424 / R1) (Ralstonia taiwanensis (strain LMG 19424))).